Here is a 317-residue protein sequence, read N- to C-terminus: Adenine deaminase (317 aa).

His14, His16, and His194 together coordinate Zn(2+). Catalysis depends on Glu197, which acts as the Proton donor. Asp275 lines the Zn(2+) pocket. Asp276 serves as a coordination point for substrate.

Belongs to the metallo-dependent hydrolases superfamily. Adenosine and AMP deaminases family. Adenine deaminase type 2 subfamily. Zn(2+) serves as cofactor.

It catalyses the reaction adenine + H2O + H(+) = hypoxanthine + NH4(+). Its function is as follows. Catalyzes the hydrolytic deamination of adenine to hypoxanthine. Plays an important role in the purine salvage pathway and in nitrogen catabolism. This is Adenine deaminase from Pseudomonas fluorescens (strain Pf0-1).